Here is a 287-residue protein sequence, read N- to C-terminus: 33 kDa chaperonin (287 aa).

2 disulfide bridges follow: cysteine 231-cysteine 233 and cysteine 264-cysteine 267.

This sequence belongs to the HSP33 family. Under oxidizing conditions two disulfide bonds are formed involving the reactive cysteines. Under reducing conditions zinc is bound to the reactive cysteines and the protein is inactive.

It localises to the cytoplasm. Its function is as follows. Redox regulated molecular chaperone. Protects both thermally unfolding and oxidatively damaged proteins from irreversible aggregation. Plays an important role in the bacterial defense system toward oxidative stress. The chain is 33 kDa chaperonin from Thermosipho melanesiensis (strain DSM 12029 / CIP 104789 / BI429).